Consider the following 717-residue polypeptide: SAGA factor-like TAF6 (717 aa).

The interval 123-204 is sufficient for interaction with Taf9; that stretch reads KSYAGFDPRS…VPPMLGAMDS (82 aa).

It belongs to the TAF6 family. As to quaternary structure, component of the Spt-Ada-Gcn5 acetyltransferase (SAGA) complex consisting of wda/Taf5L, Saf6, Taf9, Taf10b, Taf12, Ada1, Spt3, Spt7, Spt20, Sf3b3, Sf3b5, Nipped-A/Tra1, a histone acetyltransferase (HAT) module made up of Gcn5, Ada2b (Isoform B), Ada3 and Sgf29, and a deubiquitinase (DUB) module made up of not/nonstop, Sgf11 and e(y)2 tethered to SAGA by Atxn7; not essential for SAGA complex assembly, histone-modifying activity or chromosomal recruitment. Interacts (via N-terminal histone-fold domain) with Taf9 (via N-terminal histone-fold domain); the interaction is probably direct. Probably forms a histone-like heterooctamer structure with Taf9, Taf12 and Taf10b.

Its subcellular location is the nucleus. It localises to the chromosome. Functionally, component of the transcription regulatory complex SAGA, a multiprotein complex that activates transcription by remodeling chromatin and mediating histone acetylation and deubiquitination. The SAGA complex predominantly acetylates histone H3. Involved in SAGA complex coactivator function but not essential for SAGA complex assembly, histone-modifying activity or chromosomal recruitment. Required for oogenesis; involved in transcriptional activation. The sequence is that of SAGA factor-like TAF6 from Drosophila melanogaster (Fruit fly).